The following is a 189-amino-acid chain: Peptidyl-tRNA hydrolase (189 aa).

TRNA is bound at residue Y14. H19 functions as the Proton acceptor in the catalytic mechanism. Residues Y64, N66, and N112 each contribute to the tRNA site.

The protein belongs to the PTH family. As to quaternary structure, monomer.

It localises to the cytoplasm. The enzyme catalyses an N-acyl-L-alpha-aminoacyl-tRNA + H2O = an N-acyl-L-amino acid + a tRNA + H(+). Hydrolyzes ribosome-free peptidyl-tRNAs (with 1 or more amino acids incorporated), which drop off the ribosome during protein synthesis, or as a result of ribosome stalling. Functionally, catalyzes the release of premature peptidyl moieties from peptidyl-tRNA molecules trapped in stalled 50S ribosomal subunits, and thus maintains levels of free tRNAs and 50S ribosomes. This Dehalococcoides mccartyi (strain ATCC BAA-2100 / JCM 16839 / KCTC 5957 / BAV1) protein is Peptidyl-tRNA hydrolase.